The sequence spans 380 residues: MKKPLGKIVASTALLISVAFSSSIASAAEEAKEKYLIGFNEQEAVSEFVEQIEANDDVAILSEEEEVEIELLHEFETIPVLSVELSPEDVDALELDPTISYIEEDAEVTTMAQSVPWGISRVQAPAAHNRGLTGSGVKVAVLDTGISTHPDLNIRGGASFVPGEPSTQDGNGHGTHVAGTIAALNNSIGVLGVAPSAELYAVKVLGASGSGSVSSIAQGLEWAGNNGMHVANLSLGSPSPSATLEQAVNSATSRGVLVVAASGNSGAGSISYPARYANAMAVGATDQNNNRASFSQYGAGLDIVAPGVNVQSTYPGSTYASLNGTSMATPHVAGVAALVKQKNPSWSNVQIRNHLKNTATGLGNTNLYGSGLVNAEAATR.

The signal sequence occupies residues Met1–Ala27. The propeptide occupies Ala28–Met111. The Inhibitor I9 domain occupies Lys34 to Met111. Gln113 is a Ca(2+) binding site. Residues Pro116–Thr379 enclose the Peptidase S8 domain. Asp143 acts as the Charge relay system in catalysis. Asp151 contacts Ca(2+). The Charge relay system role is filled by His173. Ca(2+) contacts are provided by Leu184, Asn186, Ile188, Val190, Ala274, Tyr276, Ala279, and Asp302. The active-site Charge relay system is the Ser326.

It belongs to the peptidase S8 family. As to quaternary structure, monomer. The cofactor is Ca(2+).

Its subcellular location is the secreted. Its activity is regulated as follows. Activity is inhibited by phenylmethylsulfonyl fluoride and chymostatin. Alkaline serine protease that cleaves various substrates, including N-succinyl-Ala-Ala-Pro-Phe-pNA, N-succinyl-Ala-Ala-Pro-MetpNA, oxidized insulin B chain, casein, hemoglobin and scleroproteins, such as keratin, alpha-keratin and elastin. The protein is M-protease (aprE) of Shouchella clausii (strain KSM-K16) (Alkalihalobacillus clausii).